Reading from the N-terminus, the 369-residue chain is Glycolate oxidase 1 (369 aa).

Residues 1–360 (MGEITNVMEY…TRKHIITESD (360 aa)) form the FMN hydroxy acid dehydrogenase domain. Tyr-25 is a binding site for glyoxylate. Residues 78–80 (PTA), Ser-107, 128–130 (QLY), and Thr-156 each bind FMN. Tyr-130 lines the glyoxylate pocket. Arg-165 provides a ligand contact to glyoxylate. Residues Lys-231 and Ser-253 each contribute to the FMN site. Glyoxylate is bound by residues His-255 and Arg-258. Residue His-255 is the Proton acceptor of the active site. FMN contacts are provided by residues 286-290 (DGGVR) and 309-310 (GR).

Belongs to the FMN-dependent alpha-hydroxy acid dehydrogenase family. Homotetramer. FMN is required as a cofactor.

The protein localises to the peroxisome. The enzyme catalyses glycolate + O2 = glyoxylate + H2O2. It participates in photosynthesis; photorespiration; glycine from 2-phosphoglycolate: step 2/3. Catalyzes the oxidation of glycolate to glyoxylate, with a reduction of O2 to H2O2. Is an essential enzyme in photorespiration in plants. Photorespiration plays a vital role in C4 photosynthesis in Z.mays and is essential for maize seedling development and maintaining low (non-toxic) levels of glycolate. The chain is Glycolate oxidase 1 from Zea mays (Maize).